Here is a 470-residue protein sequence, read N- to C-terminus: Solvent efflux pump outer membrane protein SrpC (470 aa).

The signal sequence occupies residues M1–G16. C17 is lipidated: N-palmitoyl cysteine. Residue C17 is the site of S-diacylglycerol cysteine attachment. Residues L104 to G123 form a disordered region.

This sequence belongs to the outer membrane factor (OMF) (TC 1.B.17) family.

It is found in the cell outer membrane. In terms of biological role, the outer membrane component of an organic solvent efflux pump. Involved in export of a number of low log POW compounds including hexane (log POW 3.5), toluene (log POW 2.5) and dimethylphthalate (log POW 2.3). The solvent resistance phenotype has been postulated to depend on the operon expression level. The polypeptide is Solvent efflux pump outer membrane protein SrpC (srpC) (Pseudomonas putida (Arthrobacter siderocapsulatus)).